A 99-amino-acid polypeptide reads, in one-letter code: Nucleoid-associated protein SSA_0326 (99 aa).

The segment covering 1–15 (MMNMQSMMKQAQKLQ) has biased composition (low complexity). Positions 1 to 23 (MMNMQSMMKQAQKLQKQMEKGQA) are disordered.

Belongs to the YbaB/EbfC family. In terms of assembly, homodimer.

The protein resides in the cytoplasm. It localises to the nucleoid. In terms of biological role, binds to DNA and alters its conformation. May be involved in regulation of gene expression, nucleoid organization and DNA protection. This Streptococcus sanguinis (strain SK36) protein is Nucleoid-associated protein SSA_0326.